Reading from the N-terminus, the 538-residue chain is Dolichol kinase (538 aa).

Topologically, residues 1–18 are lumenal; it reads MTRECAPPTPGSGAPLSG. A helical membrane pass occupies residues 19–39; that stretch reads SVLAEAAVVFVVVLSIHAAVW. At 40-74 the chain is on the cytoplasmic side; it reads DRYSWCAVALAVQAFYVQYKWDRLLQQGSAVFQFR. Residues 75-95 form a helical membrane-spanning segment; sequence MSANSGLLPASVVMPLLGLVM. Residues 96-111 lie on the Lumenal side of the membrane; that stretch reads KERCQAAGNPYFERFG. The chain crosses the membrane as a helical span at residues 112–132; the sequence is IVVAATGMAVALFSSVLALGI. Topologically, residues 133 to 134 are cytoplasmic; sequence TR. Residues 135–155 form a helical membrane-spanning segment; that stretch reads PVPTNTCVISGLAGGVIIYIM. At 156-163 the chain is on the lumenal side; the sequence is KHSLSVGE. A helical transmembrane segment spans residues 164–184; that stretch reads VIEVLEALLIFVYLNMILLYL. The Cytoplasmic segment spans residues 185–188; it reads LPRC. The helical transmembrane segment at 189-209 threads the bilayer; the sequence is FTPGEALLVLGGISFMLNQLI. Over 210–224 the chain is Lumenal; it reads KRSLTVVESQGDPLD. Residues 225–245 form a helical membrane-spanning segment; it reads FFLLVVVVGMVLMGIFFSTLF. Topologically, residues 246-254 are cytoplasmic; sequence VFMDSGTWA. The helical transmembrane segment at 255-275 threads the bilayer; that stretch reads SSIFFHLMTCVLGLGVVLPWL. At 276-297 the chain is on the lumenal side; the sequence is HRLIRRNPLLWLFQFLFQTETR. The chain crosses the membrane as a helical span at residues 298 to 318; the sequence is VYLLAYWCLLATVACLVVLYQ. Over 319-337 the chain is Cytoplasmic; the sequence is NAKRSSSESKKHQAPTITR. The chain crosses the membrane as a helical span at residues 338–354; the sequence is KYFHFIVVATYIPGIIL. At 355-359 the chain is on the lumenal side; that stretch reads DRPLL. The helical transmembrane segment at 360–380 threads the bilayer; that stretch reads YVAATVCLAVFIFLEYVRYFR. Residues 381 to 401 lie on the Cytoplasmic side of the membrane; sequence IKPLGHTLRSLLSLFLDERDS. The chain crosses the membrane as a helical span at residues 402 to 422; the sequence is GPLILTHIYLLLGMSLPIWLV. Over 423–436 the chain is Lumenal; that stretch reads PRPCTQKGSLGGAR. A helical membrane pass occupies residues 437–457; the sequence is ALVPYAGVLAVGVGDTVASIF. Residues 458–472 lie on the Cytoplasmic side of the membrane; the sequence is GSTMGEIRWPGTKKT. Residues 459-474 are CTP-binding; it reads STMGEIRWPGTKKTFE. A helical transmembrane segment spans residues 473-493; it reads FEGTMTSIFAQIISVALILIF. Residues 494–495 are Lumenal-facing; the sequence is DS. Residues 496–516 traverse the membrane as a helical segment; that stretch reads GVDLNYSYAWILGSISTVSLL. The Cytoplasmic segment spans residues 517 to 538; the sequence is EAYTTQIDNLLLPLYLLILLMA.

This sequence belongs to the polyprenol kinase family.

The protein localises to the endoplasmic reticulum membrane. It carries out the reaction a di-trans,poly-cis-dolichol + CTP = a di-trans,poly-cis-dolichyl phosphate + CDP + H(+). It functions in the pathway protein modification; protein glycosylation. In terms of biological role, catalyzes CTP-mediated phosphorylation of dolichol, the terminal step in de novo dolichyl monophosphate (Dol-P) biosynthesis. Dol-P is a lipid carrier essential for the synthesis of N-linked and O-linked oligosaccharides and for GPI anchors. This Bos taurus (Bovine) protein is Dolichol kinase (DOLK).